Here is a 357-residue protein sequence, read N- to C-terminus: MSDKTPRKPTAFRLEQPARVSAASEQEEPRRPRAVKDLEQITPQADVFDLTDDEAAELEILDPAFEAPERKGWSLSRILFGALGILVSFAIGIWTEDLIRALFARADWLGWTALGVAMVALAAFAAIILRELVALRRLASVQHLRKDAADAAERDDMAAARKAVDALRTIAAGIPETAKGRQLLESLTDDIIDGRDLIRLAETEILRPLDREARTLVLNASKRVSIVTAISPRALVDIGYVIFESARLIRRLSQLYGGRPGTLGFIKFARRVIAHLAVTGTIAMGDSVMQQLVGHGLASRLSAKLGEGVVNGLMTARIGIAAMDVVRPFPFNAEKRPGIGDFIGDLARLNSDRNARK.

The segment at 1-36 (MSDKTPRKPTAFRLEQPARVSAASEQEEPRRPRAVK) is disordered. Over residues 27 to 36 (EEPRRPRAVK) the composition is skewed to basic and acidic residues. 2 helical membrane passes run 78-98 (ILFGALGILVSFAIGIWTEDL) and 109-129 (LGWTALGVAMVALAAFAAIIL).

It belongs to the UPF0283 family.

Its subcellular location is the cell inner membrane. The chain is UPF0283 membrane protein BMEA_A1074 from Brucella melitensis biotype 2 (strain ATCC 23457).